The primary structure comprises 505 residues: ATP synthase subunit alpha (505 aa).

An ATP-binding site is contributed by 171–178 (GDRQTGKT).

Belongs to the ATPase alpha/beta chains family. In terms of assembly, F-type ATPases have 2 components, CF(1) - the catalytic core - and CF(0) - the membrane proton channel. CF(1) has five subunits: alpha(3), beta(3), gamma(1), delta(1), epsilon(1). CF(0) has three main subunits: a(1), b(2) and c(9-12). The alpha and beta chains form an alternating ring which encloses part of the gamma chain. CF(1) is attached to CF(0) by a central stalk formed by the gamma and epsilon chains, while a peripheral stalk is formed by the delta and b chains.

It localises to the cell inner membrane. It catalyses the reaction ATP + H2O + 4 H(+)(in) = ADP + phosphate + 5 H(+)(out). Functionally, produces ATP from ADP in the presence of a proton gradient across the membrane. The alpha chain is a regulatory subunit. The polypeptide is ATP synthase subunit alpha (Campylobacter fetus subsp. fetus (strain 82-40)).